Consider the following 344-residue polypeptide: Anthranilate phosphoribosyltransferase (344 aa).

Residues G85, 88 to 89 (GD), T93, 95 to 98 (NIST), 113 to 121 (KHGNRSVSS), and S125 each bind 5-phospho-alpha-D-ribose 1-diphosphate. G85 is a binding site for anthranilate. S97 is a binding site for Mg(2+). N116 lines the anthranilate pocket. An anthranilate-binding site is contributed by R171. 2 residues coordinate Mg(2+): D229 and E230.

This sequence belongs to the anthranilate phosphoribosyltransferase family. In terms of assembly, homodimer. Mg(2+) is required as a cofactor.

It catalyses the reaction N-(5-phospho-beta-D-ribosyl)anthranilate + diphosphate = 5-phospho-alpha-D-ribose 1-diphosphate + anthranilate. It participates in amino-acid biosynthesis; L-tryptophan biosynthesis; L-tryptophan from chorismate: step 2/5. Functionally, catalyzes the transfer of the phosphoribosyl group of 5-phosphorylribose-1-pyrophosphate (PRPP) to anthranilate to yield N-(5'-phosphoribosyl)-anthranilate (PRA). The protein is Anthranilate phosphoribosyltransferase of Shewanella amazonensis (strain ATCC BAA-1098 / SB2B).